Here is a 262-residue protein sequence, read N- to C-terminus: CD99 antigen-like protein 2 (262 aa).

The N-terminal stretch at 1–25 (MVAWRSAFLVCLAFSLATLVQRGSG) is a signal peptide. Topologically, residues 26–185 (DFDDFNLEDA…PGSGMVAEPG (160 aa)) are extracellular. The tract at residues 38–181 (ETSSVKQPWD…SNDDPGSGMV (144 aa)) is disordered. Composition is skewed to low complexity over residues 49 to 60 (TTTTTTNRPGTT) and 98 to 119 (VTTT…GNDF). Basic and acidic residues-rich tracts occupy residues 125-136 (LDDRNDRDDGRR) and 159-168 (YKPDKGKGDG). O-linked (Xyl...) (chondroitin sulfate) serine glycosylation is present at Ser-178. Residues 186-206 (TIAGVASALAMALIGAVSSYI) form a helical membrane-spanning segment. Residues 207 to 262 (SYQQKKFCFSIQQGLNADYVKGENLEAVVCEEPQVKYSTLHTQSAEPPPPPEPARI) lie on the Cytoplasmic side of the membrane.

Belongs to the CD99 family. Post-translationally, O-glycosylated. Detected in cerebrospinal fluid (at protein level). Expressed in many tissues, with low expression in thymus.

It is found in the cell membrane. The protein resides in the cell junction. The protein localises to the secreted. In terms of biological role, plays a role in a late step of leukocyte extravasation helping cells to overcome the endothelial basement membrane. Acts at the same site as, but independently of, PECAM1. Homophilic adhesion molecule, but these interactions may not be required for cell aggregation. The sequence is that of CD99 antigen-like protein 2 (CD99L2) from Homo sapiens (Human).